The sequence spans 165 residues: Large ribosomal subunit protein uL11 (165 aa).

The protein belongs to the universal ribosomal protein uL11 family. Part of the ribosomal stalk of the 50S ribosomal subunit. Interacts with L10 and the large rRNA to form the base of the stalk. L10 forms an elongated spine to which L12 dimers bind in a sequential fashion forming a multimeric L10(L12)X complex.

Functionally, forms part of the ribosomal stalk which helps the ribosome interact with GTP-bound translation factors. The chain is Large ribosomal subunit protein uL11 from Thermococcus kodakarensis (strain ATCC BAA-918 / JCM 12380 / KOD1) (Pyrococcus kodakaraensis (strain KOD1)).